We begin with the raw amino-acid sequence, 528 residues long: Ecdysteroid UDP-glucosyltransferase (528 aa).

The N-terminal stretch at 1 to 32 (MGHLHIVHWRLTMNGAIAALFLCLVMVHQQHA) is a signal peptide.

Belongs to the UDP-glycosyltransferase family.

Catalyzes the transfer of glucose from UDP-glucose to ecdysteroids which are insect molting hormones. Expression of egt interferes with normal insect development and block molting. This Mamestra brassicae nuclear polyhedrosis virus (MbNPV) protein is Ecdysteroid UDP-glucosyltransferase (EGT).